Here is a 314-residue protein sequence, read N- to C-terminus: Formimidoylglutamase (314 aa).

H127, D153, H155, D157, D245, and D247 together coordinate Mn(2+).

It belongs to the arginase family. Mn(2+) is required as a cofactor.

The catalysed reaction is N-formimidoyl-L-glutamate + H2O = formamide + L-glutamate. It functions in the pathway amino-acid degradation; L-histidine degradation into L-glutamate; L-glutamate from N-formimidoyl-L-glutamate (hydrolase route): step 1/1. Its function is as follows. Catalyzes the conversion of N-formimidoyl-L-glutamate to L-glutamate and formamide. This Aeromonas salmonicida (strain A449) protein is Formimidoylglutamase.